A 402-amino-acid chain; its full sequence is Phosphoglycerate kinase (402 aa).

Residues 24–26 (DFN), R40, 63–66 (HFGR), R122, and R155 contribute to the substrate site. ATP contacts are provided by residues K206, G297, E328, and 357–360 (GGDS).

Belongs to the phosphoglycerate kinase family. In terms of assembly, monomer.

The protein resides in the cytoplasm. The catalysed reaction is (2R)-3-phosphoglycerate + ATP = (2R)-3-phospho-glyceroyl phosphate + ADP. It functions in the pathway carbohydrate degradation; glycolysis; pyruvate from D-glyceraldehyde 3-phosphate: step 2/5. This Prochlorococcus marinus (strain SARG / CCMP1375 / SS120) protein is Phosphoglycerate kinase.